The chain runs to 195 residues: Protein GrpE (195 aa).

The protein belongs to the GrpE family. In terms of assembly, homodimer.

It localises to the cytoplasm. Functionally, participates actively in the response to hyperosmotic and heat shock by preventing the aggregation of stress-denatured proteins, in association with DnaK and GrpE. It is the nucleotide exchange factor for DnaK and may function as a thermosensor. Unfolded proteins bind initially to DnaJ; upon interaction with the DnaJ-bound protein, DnaK hydrolyzes its bound ATP, resulting in the formation of a stable complex. GrpE releases ADP from DnaK; ATP binding to DnaK triggers the release of the substrate protein, thus completing the reaction cycle. Several rounds of ATP-dependent interactions between DnaJ, DnaK and GrpE are required for fully efficient folding. The chain is Protein GrpE from Francisella tularensis subsp. tularensis (strain FSC 198).